The following is a 266-amino-acid chain: 2-Cys peroxiredoxin BAS1, chloroplastic (266 aa).

Residues 1–16 (MASVASSTTLISSPSS) are compositionally biased toward low complexity. The interval 1 to 25 (MASVASSTTLISSPSSRVFPAKSSL) is disordered. The transit peptide at 1-65 (MASVASSTTL…SSTSRRSFAV (65 aa)) directs the protein to the chloroplast. A Thioredoxin domain is found at 73-232 (PLVGNKAPDF…TMRTLQALQY (160 aa)). Residue C119 is the Cysteine sulfenic acid (-SOH) intermediate of the active site.

The protein belongs to the peroxiredoxin family. AhpC/Prx1 subfamily. As to quaternary structure, homodimer; disulfide-linked, upon oxidation. Interacts with the plastidial thioredoxin CDSP32. Interacts with the plastidial NADPH-dependent thioredoxin reductase ANTR-C.

The protein resides in the plastid. It localises to the chloroplast. The enzyme catalyses a hydroperoxide + [thioredoxin]-dithiol = an alcohol + [thioredoxin]-disulfide + H2O. Thiol-specific peroxidase that catalyzes the reduction of hydrogen peroxide and organic hydroperoxides to water and alcohols, respectively. Plays a role in cell protection against oxidative stress by detoxifying peroxides. May be an antioxidant enzyme particularly in the developing shoot and photosynthesizing leaf. The sequence is that of 2-Cys peroxiredoxin BAS1, chloroplastic (BAS1) from Arabidopsis thaliana (Mouse-ear cress).